The sequence spans 533 residues: CTP synthase (533 aa).

The interval 1 to 268 (MGETKYIFVT…DETILQKMGL (268 aa)) is amidoligase domain. Residue S15 participates in CTP binding. UTP is bound at residue S15. ATP is bound at residue 16-21 (SLGKGI). Y56 is an L-glutamine binding site. D73 is an ATP binding site. Positions 73 and 143 each coordinate Mg(2+). Residues 150-152 (DIE), 189-194 (KTKPTQ), and K225 each bind CTP. Residues 189-194 (KTKPTQ) and K225 contribute to the UTP site. Positions 301–533 (YVELQDAYKS…VSFIKAAIDK (233 aa)) constitute a Glutamine amidotransferase type-1 domain. Residue G356 coordinates L-glutamine. The Nucleophile; for glutamine hydrolysis role is filled by C383. L-glutamine is bound by residues 384-387 (LGMQ), E407, and R464. Residues H509 and E511 contribute to the active site.

This sequence belongs to the CTP synthase family. In terms of assembly, homotetramer.

It carries out the reaction UTP + L-glutamine + ATP + H2O = CTP + L-glutamate + ADP + phosphate + 2 H(+). The catalysed reaction is L-glutamine + H2O = L-glutamate + NH4(+). It catalyses the reaction UTP + NH4(+) + ATP = CTP + ADP + phosphate + 2 H(+). It functions in the pathway pyrimidine metabolism; CTP biosynthesis via de novo pathway; CTP from UDP: step 2/2. With respect to regulation, allosterically activated by GTP, when glutamine is the substrate; GTP has no effect on the reaction when ammonia is the substrate. The allosteric effector GTP functions by stabilizing the protein conformation that binds the tetrahedral intermediate(s) formed during glutamine hydrolysis. Inhibited by the product CTP, via allosteric rather than competitive inhibition. Functionally, catalyzes the ATP-dependent amination of UTP to CTP with either L-glutamine or ammonia as the source of nitrogen. Regulates intracellular CTP levels through interactions with the four ribonucleotide triphosphates. The protein is CTP synthase of Bacteroides fragilis (strain YCH46).